The chain runs to 642 residues: Influenza virus NS1A-binding protein (642 aa).

Positions 1–131 (MIPNGYLMFE…GDYLLSRMDV (131 aa)) constitute a BTB domain. The BACK domain maps to 132–350 (TSCISYRNFA…MQQDELIEKP (219 aa)). The interval 164–368 (ISEEEEFLKL…SGLGTAEMNG (205 aa)) is sufficient for AHR interaction and signaling. A phosphoserine mark is found at Ser246, Ser277, Ser322, Ser336, and Ser338. The segment at 257-281 (KPPRENGHKQISSSSTGCLSSPNAT) is disordered. Polar residues predominate over residues 265 to 281 (KQISSSSTGCLSSPNAT). 6 Kelch repeats span residues 384–421 (TVEC…YVVG), 432–469 (CGEM…YIVG), 481–518 (NCDV…YIIG), 527–565 (NTVE…FVCG), 575–612 (CVEM…YAVG), and 622–642 (TVEV…IFQF).

This sequence belongs to the BTB-kelch protein family. Homodimer; through the BTB domain. Interacts with AHR/Aryl hydrocarbon receptor. Interacts (via BACK domain) with pre-mRNA-binding protein HNRNPK; the interaction is direct. Interacts (via BACK domain) with splicing factor PTBP1; the interaction is direct. Interacts (via Kelch repeats) with RNA polymerase POLR2A (via C-terminal domain). Interacts (via BACK domain) with splicing factor SNRPA; the interaction is indirect. Interacts (via Kelch repeats) with splicing factor SART1. Interacts (via BACK domain) with ALYREF; the interaction is indirect and likely plays a role in mRNA nuclear export. Interacts (via Kelch repeats) with KLHL20 (via Kelch repeats); this interaction blocks the assembly of Cul3-KLHL20 complex. In terms of assembly, (Microbial infection) Interacts (via BACK domain) with influenza A virus non-structural protein 1 (NS1); the interaction is direct and bridges the interaction between NS1 and HNRNPK.

The protein localises to the cytoplasm. It localises to the cytoskeleton. The protein resides in the nucleus. It is found in the nucleoplasm. Involved in many cell functions, including pre-mRNA splicing, the aryl hydrocarbon receptor (AHR) pathway, F-actin organization and protein ubiquitination. Plays a role in the dynamic organization of the actin skeleton as a stabilizer of actin filaments by association with F-actin through Kelch repeats. Protects cells from cell death induced by actin destabilization. Functions as modifier of the AHR/Aryl hydrocarbon receptor pathway increasing the concentration of AHR available to activate transcription. In addition, functions as a negative regulator of BCR(KLHL20) E3 ubiquitin ligase complex to prevent ubiquitin-mediated proteolysis of PML and DAPK1, two tumor suppressors. Inhibits pre-mRNA splicing (in vitro). May play a role in mRNA nuclear export. Functionally, (Microbial infection) Involved in the alternative splicing of influenza A virus M1 mRNA through interaction with HNRNPK, thereby facilitating the generation of viral M2 protein. The BTB and Kelch domains are required for splicing activity. Promotes export of viral M mRNA and RNP via its interaction with mRNA export factor ALYREF. This chain is Influenza virus NS1A-binding protein, found in Homo sapiens (Human).